The following is a 191-amino-acid chain: Protein hugin (191 aa).

The signal sequence occupies residues 1–24 (MCGPSYCTLLLIAASCYILVCSHA). Residues 25-119 (KSLQGTSKLD…LTYYLLLQKL (95 aa)) constitute a propeptide that is removed on maturation. A leucine amide mark is found at Leu-137 and Leu-181. Residues 185-191 (AQVCGGD) constitute a propeptide that is removed on maturation.

It belongs to the pyrokinin family. As to expression, expressed in a subgroup of neurosecretory cells in the subesophageal ganglion from embryonic stage 9 to larval stages.

Its subcellular location is the secreted. Functionally, probably has a role in larval molting. The chain is Protein hugin (Hug) from Drosophila melanogaster (Fruit fly).